Consider the following 157-residue polypeptide: Protein NrdI (157 aa).

The protein belongs to the NrdI family.

Probably involved in ribonucleotide reductase function. This Mycoplasma capricolum subsp. capricolum (strain California kid / ATCC 27343 / NCTC 10154) protein is Protein NrdI.